Reading from the N-terminus, the 343-residue chain is N-acetyl-gamma-glutamyl-phosphate reductase (343 aa).

Cys147 is a catalytic residue.

It belongs to the NAGSA dehydrogenase family. Type 1 subfamily.

It localises to the cytoplasm. It carries out the reaction N-acetyl-L-glutamate 5-semialdehyde + phosphate + NADP(+) = N-acetyl-L-glutamyl 5-phosphate + NADPH + H(+). It participates in amino-acid biosynthesis; L-arginine biosynthesis; N(2)-acetyl-L-ornithine from L-glutamate: step 3/4. Functionally, catalyzes the NADPH-dependent reduction of N-acetyl-5-glutamyl phosphate to yield N-acetyl-L-glutamate 5-semialdehyde. The chain is N-acetyl-gamma-glutamyl-phosphate reductase from Listeria monocytogenes serotype 4b (strain F2365).